We begin with the raw amino-acid sequence, 135 residues long: Small ribosomal subunit protein uS12 (135 aa).

D89 carries the post-translational modification 3-methylthioaspartic acid. The interval 114–135 (RSRYGAKKGAAKQAAAAKSKKK) is disordered. Low complexity predominate over residues 124-135 (AKQAAAAKSKKK).

It belongs to the universal ribosomal protein uS12 family. In terms of assembly, part of the 30S ribosomal subunit. Contacts proteins S8 and S17. May interact with IF1 in the 30S initiation complex.

In terms of biological role, with S4 and S5 plays an important role in translational accuracy. Its function is as follows. Interacts with and stabilizes bases of the 16S rRNA that are involved in tRNA selection in the A site and with the mRNA backbone. Located at the interface of the 30S and 50S subunits, it traverses the body of the 30S subunit contacting proteins on the other side and probably holding the rRNA structure together. The combined cluster of proteins S8, S12 and S17 appears to hold together the shoulder and platform of the 30S subunit. The sequence is that of Small ribosomal subunit protein uS12 from Amoebophilus asiaticus (strain 5a2).